We begin with the raw amino-acid sequence, 509 residues long: tRNA-2-methylthio-N(6)-dimethylallyladenosine synthase (509 aa).

The span at Met1–Ser15 shows a compositional bias: polar residues. The disordered stretch occupies residues Met1 to Tyr26. The span at Thr16–Lys25 shows a compositional bias: basic and acidic residues. In terms of domain architecture, MTTase N-terminal spans Arg66–Phe184. Positions 75, 111, 145, 221, 225, and 228 each coordinate [4Fe-4S] cluster. Residues Arg207–Glu437 form the Radical SAM core domain. A TRAM domain is found at Asn440–Glu503.

The protein belongs to the methylthiotransferase family. MiaB subfamily. In terms of assembly, monomer. Requires [4Fe-4S] cluster as cofactor.

It localises to the cytoplasm. It catalyses the reaction N(6)-dimethylallyladenosine(37) in tRNA + (sulfur carrier)-SH + AH2 + 2 S-adenosyl-L-methionine = 2-methylsulfanyl-N(6)-dimethylallyladenosine(37) in tRNA + (sulfur carrier)-H + 5'-deoxyadenosine + L-methionine + A + S-adenosyl-L-homocysteine + 2 H(+). Catalyzes the methylthiolation of N6-(dimethylallyl)adenosine (i(6)A), leading to the formation of 2-methylthio-N6-(dimethylallyl)adenosine (ms(2)i(6)A) at position 37 in tRNAs that read codons beginning with uridine. The polypeptide is tRNA-2-methylthio-N(6)-dimethylallyladenosine synthase (Bacillus cereus (strain AH187)).